The primary structure comprises 514 residues: 3-octaprenyl-4-hydroxybenzoate carboxy-lyase (514 aa).

Asn177 provides a ligand contact to Mn(2+). Residues 180-182, 194-196, and 199-200 contribute to the prenylated FMN site; these read IYR, RWL, and RG. Glu243 contributes to the Mn(2+) binding site. Asp314 serves as the catalytic Proton donor.

Belongs to the UbiD family. As to quaternary structure, homohexamer. Prenylated FMN serves as cofactor. Mn(2+) is required as a cofactor.

Its subcellular location is the cell membrane. The enzyme catalyses a 4-hydroxy-3-(all-trans-polyprenyl)benzoate + H(+) = a 2-(all-trans-polyprenyl)phenol + CO2. The protein operates within cofactor biosynthesis; ubiquinone biosynthesis. In terms of biological role, catalyzes the decarboxylation of 3-octaprenyl-4-hydroxy benzoate to 2-octaprenylphenol, an intermediate step in ubiquinone biosynthesis. This chain is 3-octaprenyl-4-hydroxybenzoate carboxy-lyase, found in Bordetella pertussis (strain Tohama I / ATCC BAA-589 / NCTC 13251).